A 757-amino-acid chain; its full sequence is Chloride anion exchanger (757 aa).

Topologically, residues 1–71 (MIEAIGNQYV…SWLPAYKIKE (71 aa)) are cytoplasmic. Residues 72 to 92 (WLLSDIVSGISTGLVAVLQGL) form a helical membrane-spanning segment. A topological domain (extracellular) is located at residue A93. Residues 94–114 (FALLVNIPPAYGLYAAFFPVI) traverse the membrane as a helical segment. At 115 to 124 (TYFFLGTSRH) the chain is on the cytoplasmic side. A helical membrane pass occupies residues 125-145 (ISVGPFPVLSMMVGVVVTRVV). The Extracellular portion of the chain corresponds to 146 to 176 (SDPNASSELSSSSTENDSFIEEKVMVAASVT). Residues N149 and N161 are each glycosylated (N-linked (GlcNAc...) asparagine). The chain crosses the membrane as a helical span at residues 177-197 (VLSGIIQLLLGVLQVGFVVIY). The Cytoplasmic segment spans residues 198 to 201 (LSES). A helical membrane pass occupies residues 202–222 (LISGFTTAAAIHVLVSQLKFM). Topologically, residues 223 to 250 (LQLPVPAYSDPFSIFKVLESVFTQIQKT) are extracellular. Residues 251 to 271 (NIADLVTSVIILVVVFVFKEI) traverse the membrane as a helical segment. At 272–278 (NQRYRSK) the chain is on the cytoplasmic side. The chain crosses the membrane as a helical span at residues 279-299 (LPVPIPIELIMTVIATGVSYG). Residues 300 to 335 (CNFEDRFGVAVVGNMSLGFQPPITPSVEVFQDTIGD) are Extracellular-facing. A helical transmembrane segment spans residues 336–356 (SFGIAIVGFAVAFSVASVYSL). Residues 357-367 (KYDYPIDGNQE) lie on the Cytoplasmic side of the membrane. A helical membrane pass occupies residues 368–388 (LIALGVSNIFTGAFKGFAGST). Residues 389 to 404 (ALSRSGVQESTGGKTQ) are Extracellular-facing. A helical membrane pass occupies residues 405 to 425 (VAGLLSAVIVLIVIVAIGFLL). The Cytoplasmic portion of the chain corresponds to 426–462 (QPLQKSVLAALALGNLKGMLMQFAEIGRLWKKDKYDC). The chain crosses the membrane as a helical span at residues 463 to 483 (LIWIMTFIFAIVLGLGLGLAA). The Extracellular segment spans residues 484–757 (SVAFQLLTIV…ECQVPVETKF (274 aa)). An STAS domain is found at 518-713 (NYAEVYEPEG…LTIHDAILHI (196 aa)). Positions 754–757 (ETKF) match the PDZ-binding motif.

Belongs to the SLC26A/SulP transporter (TC 2.A.53) family. As to quaternary structure, interacts with PDZK1. Interacts with CFTR, SLC26A6 and NHERF1. Interacts (via PDZ-binding motif) with NHERF4 (via the third PDZ domain). This interaction leads to decreased expression of SLC26A3 on the cell membrane resulting in its reduced exchanger activity. N-glycosylation is required for efficient cell surface expression, and protection from proteolytic degradation. Expressed in spermatogenic cells. Expressed at high levels in cecum and colon and at lower levels in small intestine.

It localises to the apical cell membrane. The protein resides in the membrane. It is found in the cell membrane. It carries out the reaction hydrogencarbonate(in) + 2 chloride(out) = hydrogencarbonate(out) + 2 chloride(in). In terms of biological role, mediates chloride-bicarbonate exchange with a chloride bicarbonate stoichiometry of 2:1 in the intestinal epithelia. Plays a role in the chloride and bicarbonate homeostasis during sperm epididymal maturation and capacitation. The protein is Chloride anion exchanger (Slc26a3) of Mus musculus (Mouse).